Consider the following 470-residue polypeptide: Pyruvate kinase I (470 aa).

Residue arginine 32 participates in substrate binding. Residues asparagine 34, serine 36, aspartate 66, and threonine 67 each contribute to the K(+) site. Residue 34 to 37 (NFSH) participates in ATP binding. Arginine 73 serves as a coordination point for ATP. Lysine 76 carries the N6-acetyllysine modification. Lysine 156 lines the ATP pocket. A Mg(2+)-binding site is contributed by glutamate 222. Substrate-binding residues include glycine 245, aspartate 246, and threonine 278. Aspartate 246 contributes to the Mg(2+) binding site. Lysine 319 is modified (N6-acetyllysine).

It belongs to the pyruvate kinase family. In terms of assembly, homotetramer. The cofactor is Mg(2+). K(+) serves as cofactor.

The enzyme catalyses pyruvate + ATP = phosphoenolpyruvate + ADP + H(+). It participates in carbohydrate degradation; glycolysis; pyruvate from D-glyceraldehyde 3-phosphate: step 5/5. The chain is Pyruvate kinase I (pykF) from Escherichia coli O157:H7.